The chain runs to 639 residues: Zinc finger protein ZIC 5 (639 aa).

Disordered regions lie at residues 113–171 (PCGG…GHSR), 189–251 (HGAP…GHPH), 323–355 (PGPH…HLPG), and 379–409 (PDEL…PCSK). The segment covering 124 to 150 (SAPPPPAPPLPPTPSPPPPPPPPPPPA) has biased composition (pro residues). Pro residues-rich tracts occupy residues 331–343 (APPP…PAPA) and 385–401 (LPPP…PPPA). The segment at 434–461 (HVCFWEDCPREGKPFKAKYKLINHIRVH) adopts a C2H2-type 1; atypical zinc-finger fold. C2H2-type zinc fingers lie at residues 467-491 (FPCP…KRTH), 497-521 (FKCE…SHVH), and 527-551 (YYCK…MKIH). A disordered region spans residues 548 to 568 (MKIHCKSPPPSPGPLGYSSVG). Phosphoserine is present on residues serine 554, serine 558, and serine 576. The interval 607–639 (APSHLHTPSSNGTTSETEDEEIYGNPEVVRTIH) is disordered. Positions 612–621 (HTPSSNGTTS) are enriched in polar residues.

The protein belongs to the GLI C2H2-type zinc-finger protein family.

It is found in the nucleus. Functionally, essential for neural crest development, converting cells from an epidermal fate to a neural crest cell fate. Binds to DNA. The protein is Zinc finger protein ZIC 5 (ZIC5) of Homo sapiens (Human).